Consider the following 479-residue polypeptide: Ribosomal RNA small subunit methyltransferase F (479 aa).

S-adenosyl-L-methionine is bound by residues 125 to 131 (AAAPGSK), E149, D176, and D194. Residue C247 is the Nucleophile of the active site.

This sequence belongs to the class I-like SAM-binding methyltransferase superfamily. RsmB/NOP family.

The protein localises to the cytoplasm. The catalysed reaction is cytidine(1407) in 16S rRNA + S-adenosyl-L-methionine = 5-methylcytidine(1407) in 16S rRNA + S-adenosyl-L-homocysteine + H(+). In terms of biological role, specifically methylates the cytosine at position 1407 (m5C1407) of 16S rRNA. This is Ribosomal RNA small subunit methyltransferase F from Escherichia coli O127:H6 (strain E2348/69 / EPEC).